We begin with the raw amino-acid sequence, 322 residues long: Alanine dehydrogenase (322 aa).

The Proton donor/acceptor role is filled by Lys-65. Residues Arg-108, 135-136 (TQ), 157-159 (DVR), 217-219 (GAD), Lys-223, and Ser-290 each bind NAD(+).

Belongs to the ornithine cyclodeaminase/mu-crystallin family. Archaeal alanine dehydrogenase subfamily. Homodimer.

It catalyses the reaction L-alanine + NAD(+) + H2O = pyruvate + NH4(+) + NADH + H(+). Catalyzes the NAD(+)-dependent oxidative deamination of L-alanine to pyruvate, and the reverse reaction, the reductive amination of pyruvate. Its physiological role is not known. Cannot use NADP(+) instead of NAD(+) as a cosubstrate. In the deamination direction, can also efficiently use L-2-aminobutyrate as substrate. In the reductive amination direction, also exhibits high activity with 2-oxobutyrate and oxaloacetate as substrate. In contrast to bacterial homologs, does not exhibit any ornithine cyclodeaminase activity. The chain is Alanine dehydrogenase from Archaeoglobus fulgidus (strain ATCC 49558 / DSM 4304 / JCM 9628 / NBRC 100126 / VC-16).